The sequence spans 302 residues: Putative S-adenosyl-L-methionine-dependent methyltransferase MUL_2961 (302 aa).

Residues Asp-128 and 157–158 (DL) each bind S-adenosyl-L-methionine.

This sequence belongs to the UPF0677 family.

Its function is as follows. Exhibits S-adenosyl-L-methionine-dependent methyltransferase activity. The sequence is that of Putative S-adenosyl-L-methionine-dependent methyltransferase MUL_2961 from Mycobacterium ulcerans (strain Agy99).